Here is a 286-residue protein sequence, read N- to C-terminus: Urease accessory protein UreD 2 (286 aa).

The protein belongs to the UreD family. In terms of assembly, ureD, UreF and UreG form a complex that acts as a GTP-hydrolysis-dependent molecular chaperone, activating the urease apoprotein by helping to assemble the nickel containing metallocenter of UreC. The UreE protein probably delivers the nickel.

Its subcellular location is the cytoplasm. In terms of biological role, required for maturation of urease via the functional incorporation of the urease nickel metallocenter. This is Urease accessory protein UreD 2 from Bradyrhizobium sp. (strain BTAi1 / ATCC BAA-1182).